The sequence spans 397 residues: Elongation factor Tu (397 aa).

A tr-type G domain is found at 10–206 (KPHVNIGTIG…AVDTYIPTPE (197 aa)). Residues 19-26 (GHVDHGKT) are G1. 19-26 (GHVDHGKT) is a GTP binding site. Residue T26 participates in Mg(2+) binding. Positions 60 to 64 (GITIN) are G2. Positions 81 to 84 (DCPG) are G3. GTP-binding positions include 81–85 (DCPGH) and 136–139 (NKSD). The segment at 136 to 139 (NKSD) is G4. The G5 stretch occupies residues 174-176 (SAL).

Belongs to the TRAFAC class translation factor GTPase superfamily. Classic translation factor GTPase family. EF-Tu/EF-1A subfamily. In terms of assembly, monomer.

Its subcellular location is the cytoplasm. It carries out the reaction GTP + H2O = GDP + phosphate + H(+). GTP hydrolase that promotes the GTP-dependent binding of aminoacyl-tRNA to the A-site of ribosomes during protein biosynthesis. The protein is Elongation factor Tu of Clostridium kluyveri (strain ATCC 8527 / DSM 555 / NBRC 12016 / NCIMB 10680 / K1).